Consider the following 352-residue polypeptide: tRNA pseudouridine synthase D (352 aa).

The active-site Nucleophile is the aspartate 81. The region spanning 158 to 306 (GVPNYFGQQR…RHERRTLLLK (149 aa)) is the TRUD domain.

Belongs to the pseudouridine synthase TruD family.

It carries out the reaction uridine(13) in tRNA = pseudouridine(13) in tRNA. Functionally, responsible for synthesis of pseudouridine from uracil-13 in transfer RNAs. In Photobacterium profundum (strain SS9), this protein is tRNA pseudouridine synthase D.